An 854-amino-acid polypeptide reads, in one-letter code: Metastasis-associated in colon cancer protein 1 (854 aa).

S19 carries the post-translational modification Phosphoserine. A ZU5 domain is found at 212 to 349; that stretch reads VTKACKVNHQ…LSQVMYLVVA (138 aa). Residues 549 to 619 enclose the SH3 domain; sequence NFTNYGVTLK…HCKNVKVISK (71 aa).

In terms of assembly, interacts with FASLG.

It localises to the cytoplasm. The protein localises to the nucleus. In terms of biological role, acts as a transcription activator for MET and as a key regulator of HGF-MET signaling. This chain is Metastasis-associated in colon cancer protein 1 (MACC1), found in Pongo abelii (Sumatran orangutan).